The sequence spans 134 residues: Profilin-4 (134 aa).

A disulfide bridge connects residues cysteine 13 and cysteine 118. Positions 84–100 (AVIRGKKGSGGITIKKT) match the Involved in PIP2 interaction motif. Threonine 114 bears the Phosphothreonine mark.

This sequence belongs to the profilin family. In terms of assembly, occurs in many kinds of cells as a complex with monomeric actin in a 1:1 ratio. Phosphorylated by MAP kinases.

It is found in the cytoplasm. The protein resides in the cytoskeleton. Its function is as follows. Binds to actin and affects the structure of the cytoskeleton. At high concentrations, profilin prevents the polymerization of actin, whereas it enhances it at low concentrations. This chain is Profilin-4, found in Olea europaea (Common olive).